A 257-amino-acid chain; its full sequence is Large ribosomal subunit protein uL2 (257 aa).

Residues 207–231 (VEHPFGGGNHQHIGKPSTIRRDAPA) form a disordered region.

Belongs to the universal ribosomal protein uL2 family. In terms of assembly, component of the large ribosomal subunit.

The protein localises to the cytoplasm. Its function is as follows. Component of the large ribosomal subunit. The ribosome is a large ribonucleoprotein complex responsible for the synthesis of proteins in the cell. The protein is Large ribosomal subunit protein uL2 (rpl8) of Xenopus laevis (African clawed frog).